The chain runs to 372 residues: NAD(P)H-quinone oxidoreductase subunit 1, chloroplastic (372 aa).

The next 8 membrane-spanning stretches (helical) occupy residues 28-48, 65-85, 97-117, 128-148, 166-186, 254-274, 312-332, and 352-372; these read IWICIPILVVVLGSTLGVLVI, PEYAGPLGIIQALIDGLKLIL, WLFTLGPAIVVIPIVLSYLVV, IGIGIFFWIAISSVAPMGLLI, AAQAISYEIPLALCVLAIILM, FGLFYVASYINLLVSALFVSV, GIIGLGITLVKAYIFLFLAVL, and FLLPVCLGNLLLTASFQITLL.

The protein belongs to the complex I subunit 1 family. As to quaternary structure, NDH is composed of at least 16 different subunits, 5 of which are encoded in the nucleus.

It is found in the plastid. The protein resides in the chloroplast thylakoid membrane. It catalyses the reaction a plastoquinone + NADH + (n+1) H(+)(in) = a plastoquinol + NAD(+) + n H(+)(out). It carries out the reaction a plastoquinone + NADPH + (n+1) H(+)(in) = a plastoquinol + NADP(+) + n H(+)(out). Its function is as follows. NDH shuttles electrons from NAD(P)H:plastoquinone, via FMN and iron-sulfur (Fe-S) centers, to quinones in the photosynthetic chain and possibly in a chloroplast respiratory chain. The immediate electron acceptor for the enzyme in this species is believed to be plastoquinone. Couples the redox reaction to proton translocation, and thus conserves the redox energy in a proton gradient. The sequence is that of NAD(P)H-quinone oxidoreductase subunit 1, chloroplastic from Staurastrum punctulatum (Green alga).